The following is a 405-amino-acid chain: Bestrophin homolog 14 (405 aa).

Helical transmembrane passes span 28–48 (LIGF…LLDE), 63–83 (IGAQ…LIVA), 223–243 (LVYT…CLIG), and 256–276 (EITI…LGWL).

It belongs to the anion channel-forming bestrophin (TC 1.A.46) family. Calcium-sensitive chloride channel subfamily.

Its subcellular location is the membrane. This is Bestrophin homolog 14 (best-14) from Caenorhabditis elegans.